The following is a 375-amino-acid chain: B3 domain-containing protein REM-like 2 (375 aa).

3 DNA-binding regions (TF-B3) span residues 51-147 (SFVA…KRLY), 131-226 (FVTV…YGTN), and 277-375 (RLVI…KSGK).

Its subcellular location is the nucleus. The chain is B3 domain-containing protein REM-like 2 from Arabidopsis thaliana (Mouse-ear cress).